Here is a 192-residue protein sequence, read N- to C-terminus: Phage-like element PBSX protein XkdU (192 aa).

The protein to B.subtilis YqcA.

The chain is Phage-like element PBSX protein XkdU (xkdU) from Bacillus subtilis (strain 168).